Reading from the N-terminus, the 509-residue chain is Maturase K (509 aa).

Belongs to the intron maturase 2 family. MatK subfamily.

It localises to the plastid. It is found in the chloroplast. Its function is as follows. Usually encoded in the trnK tRNA gene intron. Probably assists in splicing its own and other chloroplast group II introns. This chain is Maturase K, found in Nicotiana glauca (Glaucous tobacco).